The primary structure comprises 1026 residues: Multidrug resistance protein MdtC (1026 aa).

The next 11 helical transmembrane spans lie at 15-35, 333-353, 360-380, 387-407, 431-451, 463-483, 528-548, 853-873, 897-917, 953-973, and 984-1004; these read ILIA…LPVA, EVEE…FLFL, LIPA…MYLC, LSLM…IVVL, VGFT…PLLL, FAVT…TLTP, LVGV…IAIP, LILI…LYES, LFNA…IGIV, PIMM…LSGG, and ITIV…TPVV.

Belongs to the resistance-nodulation-cell division (RND) (TC 2.A.6) family. MdtC subfamily. As to quaternary structure, part of a tripartite efflux system composed of MdtA, MdtB and MdtC. MdtC forms a heteromultimer with MdtB.

The protein resides in the cell inner membrane. This Salmonella newport (strain SL254) protein is Multidrug resistance protein MdtC.